Here is a 125-residue protein sequence, read N- to C-terminus: Protein ApaG (125 aa).

Residues 1-125 (MIDSPRVCVQ…FRLAVPTFIH (125 aa)) enclose the ApaG domain.

This is Protein ApaG from Enterobacter sp. (strain 638).